Consider the following 251-residue polypeptide: Ubiquinone/menaquinone biosynthesis C-methyltransferase UbiE (251 aa).

Residues Thr74, Asp95, 123 to 124 (NA), and Ser140 contribute to the S-adenosyl-L-methionine site.

The protein belongs to the class I-like SAM-binding methyltransferase superfamily. MenG/UbiE family.

It carries out the reaction a 2-demethylmenaquinol + S-adenosyl-L-methionine = a menaquinol + S-adenosyl-L-homocysteine + H(+). The enzyme catalyses a 2-methoxy-6-(all-trans-polyprenyl)benzene-1,4-diol + S-adenosyl-L-methionine = a 5-methoxy-2-methyl-3-(all-trans-polyprenyl)benzene-1,4-diol + S-adenosyl-L-homocysteine + H(+). Its pathway is quinol/quinone metabolism; menaquinone biosynthesis; menaquinol from 1,4-dihydroxy-2-naphthoate: step 2/2. It functions in the pathway cofactor biosynthesis; ubiquinone biosynthesis. Functionally, methyltransferase required for the conversion of demethylmenaquinol (DMKH2) to menaquinol (MKH2) and the conversion of 2-polyprenyl-6-methoxy-1,4-benzoquinol (DDMQH2) to 2-polyprenyl-3-methyl-6-methoxy-1,4-benzoquinol (DMQH2). In Enterobacter sp. (strain 638), this protein is Ubiquinone/menaquinone biosynthesis C-methyltransferase UbiE.